Reading from the N-terminus, the 520-residue chain is Peptidoglycan-recognition protein LC (520 aa).

Polar residues-rich tracts occupy residues 1–14 (MPFS…QCSN) and 27–36 (KNCSTSSTDS). Disordered regions lie at residues 1 to 78 (MPFS…RISV) and 239 to 278 (DKWK…AQTP). At 1–291 (MPFSNETEMS…PFLPNTVGRK (291 aa)) the chain is on the cytoplasmic side. Basic and acidic residues-rich tracts occupy residues 48-58 (RPEKETKDRGT) and 66-78 (KSEE…RISV). A helical; Signal-anchor for type II membrane protein transmembrane segment spans residues 292–312 (AVTVTVVFVTLTFLLGIVLAT). Over 313-520 (TTNLFGKTLN…ASFANWTHWS (208 aa)) the chain is Extracellular. N-linked (GlcNAc...) asparagine glycosylation occurs at asparagine 389. Cysteine 390 and cysteine 396 are joined by a disulfide. Residues 412 to 490 (QKCDIAYNFL…KLGKIAPSYR (79 aa)) form the N-acetylmuramoyl-L-alanine amidase domain. An N-linked (GlcNAc...) asparagine glycan is attached at asparagine 515.

This sequence belongs to the N-acetylmuramoyl-L-alanine amidase 2 family. Proteolytically cleaved, probably by a metaloprotease such as Mmp2; proteolytic cleavage leads to activation of the imd/Relish signaling pathway. As to expression, expressed in the fat body and hemocytes.

It is found in the membrane. Activated by proteolytic cleavage in response to Gram-negative bacterial infection; cleavage may be mediated by endogenous proteases, such as the metalloprotease Mmp2 or elastase, or by bacterially expressed proteases such as the surface serine protease OmpT. Functionally, major activator of the imd/Relish pathway and is likely to encode a pattern recognition molecule for the humoral immune response. Required for Relish processing and nuclear translocation following proteolytic cleavage. Involved in the response to lipopolysaccharide (LPS) and peptidoglycan of Gram-negative bacteria. The different isoforms probably display different recognition capabilities to various microbial patterns. In terms of biological role, mediates the response to LPS and Gram-negative bacteria. Its function is as follows. Mediates the response to LPS, peptidoglycan and Gram-negative bacteria. This is Peptidoglycan-recognition protein LC (PGRP-LC) from Drosophila melanogaster (Fruit fly).